The primary structure comprises 480 residues: tRNA-2-methylthio-N(6)-dimethylallyladenosine synthase (480 aa).

Residues 29–145 (GSFWIQTFGC…LEALLTQVDN (117 aa)) form the MTTase N-terminal domain. 6 residues coordinate [4Fe-4S] cluster: Cys-38, Cys-74, Cys-108, Cys-180, Cys-184, and Cys-187. A Radical SAM core domain is found at 166-403 (RDSTICAWVN…NALVERVALQ (238 aa)). A TRAM domain is found at 406–474 (SRYSGKVEQV…AFSLSGTPCD (69 aa)).

Belongs to the methylthiotransferase family. MiaB subfamily. As to quaternary structure, monomer. Requires [4Fe-4S] cluster as cofactor.

It localises to the cytoplasm. The catalysed reaction is N(6)-dimethylallyladenosine(37) in tRNA + (sulfur carrier)-SH + AH2 + 2 S-adenosyl-L-methionine = 2-methylsulfanyl-N(6)-dimethylallyladenosine(37) in tRNA + (sulfur carrier)-H + 5'-deoxyadenosine + L-methionine + A + S-adenosyl-L-homocysteine + 2 H(+). Catalyzes the methylthiolation of N6-(dimethylallyl)adenosine (i(6)A), leading to the formation of 2-methylthio-N6-(dimethylallyl)adenosine (ms(2)i(6)A) at position 37 in tRNAs that read codons beginning with uridine. This chain is tRNA-2-methylthio-N(6)-dimethylallyladenosine synthase, found in Prochlorococcus marinus (strain MIT 9303).